We begin with the raw amino-acid sequence, 443 residues long: Xaa-Pro dipeptidase (443 aa).

5 residues coordinate Mn(2+): Asp246, Asp257, His339, Glu384, and Glu423.

It belongs to the peptidase M24B family. Bacterial-type prolidase subfamily. It depends on Mn(2+) as a cofactor.

It catalyses the reaction Xaa-L-Pro dipeptide + H2O = an L-alpha-amino acid + L-proline. In terms of biological role, splits dipeptides with a prolyl residue in the C-terminal position. The sequence is that of Xaa-Pro dipeptidase from Salmonella choleraesuis (strain SC-B67).